The chain runs to 198 residues: Molybdopterin synthase catalytic subunit (198 aa).

A compositionally biased stretch (low complexity) spans 1–27 (MASQPPQEPTPTATSTPSTSALASLPP). The interval 1–40 (MASQPPQEPTPTATSTPSTSALASLPPHLDPTTYPRTLTS) is disordered. Substrate contacts are provided by residues 143–144 (HR), K159, and 166–168 (KRE). Residues 176–198 (EWRENRERDAEGKVVAEKQEERE) are disordered.

Belongs to the MoaE family. MOCS2B subfamily. In terms of assembly, heterotetramer; composed of 2 small (MOCS2A) and 2 large (MOCS2B) subunits.

Its subcellular location is the cytoplasm. It catalyses the reaction 2 [molybdopterin-synthase sulfur-carrier protein]-C-terminal-Gly-aminoethanethioate + cyclic pyranopterin phosphate + H2O = molybdopterin + 2 [molybdopterin-synthase sulfur-carrier protein]-C-terminal Gly-Gly + 2 H(+). The protein operates within cofactor biosynthesis; molybdopterin biosynthesis. Catalytic subunit of the molybdopterin synthase complex, a complex that catalyzes the conversion of precursor Z into molybdopterin. Acts by mediating the incorporation of 2 sulfur atoms from thiocarboxylated MOCS2A into precursor Z to generate a dithiolene group. This chain is Molybdopterin synthase catalytic subunit, found in Aspergillus clavatus (strain ATCC 1007 / CBS 513.65 / DSM 816 / NCTC 3887 / NRRL 1 / QM 1276 / 107).